Reading from the N-terminus, the 480-residue chain is UDP-glucose 6-dehydrogenase 3 (480 aa).

NAD(+) contacts are provided by residues 8–13 (GAGYVG), D33, R38, 86–90 (VNTPT), 127–128 (ST), and E161. Substrate-binding positions include 157-161 (EFLAE), 216-223 (KLAANAFL), and 256-269 (RIGP…VGFG). C272 serves as the catalytic Nucleophile. 272–275 (CFQK) contributes to the NAD(+) binding site. 334-335 (FK) contributes to the substrate binding site. R342 is an NAD(+) binding site. R447 serves as a coordination point for substrate.

This sequence belongs to the UDP-glucose/GDP-mannose dehydrogenase family.

The enzyme catalyses UDP-alpha-D-glucose + 2 NAD(+) + H2O = UDP-alpha-D-glucuronate + 2 NADH + 3 H(+). It functions in the pathway nucleotide-sugar biosynthesis; UDP-alpha-D-glucuronate biosynthesis; UDP-alpha-D-glucuronate from UDP-alpha-D-glucose: step 1/1. With respect to regulation, inhibited by UDP-xylose. In terms of biological role, involved in the biosynthesis of UDP-glucuronic acid (UDP-GlcA), providing nucleotide sugars for cell-wall polymers. Required for the formation of cell wall ingrowths on the outer cell walls of nematode-induced syncytia. This is UDP-glucose 6-dehydrogenase 3 (UGD3) from Arabidopsis thaliana (Mouse-ear cress).